A 569-amino-acid polypeptide reads, in one-letter code: Dihydroxy-acid dehydratase (569 aa).

Cys61 serves as a coordination point for [2Fe-2S] cluster. Asp93 serves as a coordination point for Mg(2+). Residue Cys134 participates in [2Fe-2S] cluster binding. Residues Asp135 and Lys136 each contribute to the Mg(2+) site. The residue at position 136 (Lys136) is an N6-carboxylysine. [2Fe-2S] cluster is bound at residue Cys211. Glu462 contacts Mg(2+). Ser488 serves as the catalytic Proton acceptor.

This sequence belongs to the IlvD/Edd family. Homodimer. It depends on [2Fe-2S] cluster as a cofactor. The cofactor is Mg(2+).

It catalyses the reaction (2R)-2,3-dihydroxy-3-methylbutanoate = 3-methyl-2-oxobutanoate + H2O. The catalysed reaction is (2R,3R)-2,3-dihydroxy-3-methylpentanoate = (S)-3-methyl-2-oxopentanoate + H2O. It functions in the pathway amino-acid biosynthesis; L-isoleucine biosynthesis; L-isoleucine from 2-oxobutanoate: step 3/4. The protein operates within amino-acid biosynthesis; L-valine biosynthesis; L-valine from pyruvate: step 3/4. Functions in the biosynthesis of branched-chain amino acids. Catalyzes the dehydration of (2R,3R)-2,3-dihydroxy-3-methylpentanoate (2,3-dihydroxy-3-methylvalerate) into 2-oxo-3-methylpentanoate (2-oxo-3-methylvalerate) and of (2R)-2,3-dihydroxy-3-methylbutanoate (2,3-dihydroxyisovalerate) into 2-oxo-3-methylbutanoate (2-oxoisovalerate), the penultimate precursor to L-isoleucine and L-valine, respectively. The protein is Dihydroxy-acid dehydratase of Tropheryma whipplei (strain Twist) (Whipple's bacillus).